Here is a 617-residue protein sequence, read N- to C-terminus: MNKETRFPEHFDIPLFLKNLPNLPGVYRFFNESGNVLYVGKAVNLKRRVSGYFQKNDHSPRIALMVKQVHHIETTITRSESEALILENNFIKALSPKYNILFRDDKSYPYLMLSGHQYPQMAYYRGTLKKPNQYFGPYPNSNAVRDSIQVLQKVFMLRTCEDSVFEHRDRPCLLYQIKRCTAPCVGHISEEDYRDSVREAATFLNGKTDELTRTLQHKMQTAAANLQFEEAARYRDQIQALGIMQSNQFIDSKNPNNPNDIDLLALAVSDGLVCVHWVSIRGGRHVGDKSFFPDTKNDPEPNGQDYAEAFVAQHYLGKSKPDIIISNFPVPDALKEALEGEHGKQMQFVTKTIGERKVRLKMAEQNAQMAIAQRRLQQSSQQHRIDELAKILGMDSDGLNRLECFDISHTQGEATIASCVVYDEQNIQPSQYRRYNITTAKPGDDYAAMREVLTRRYGKMQEAEANGETVKWPDAVLIDGGKGQIGVAVSVWEELGLHIPLVGIAKGPERKAGMEELILPFTGEVFRLPPNSPALHLLQTVRDESHRFAITGHRKKRDKARVTSSLSDIPGVGSKRRQALLTRFGGLRGVIAASREDLEKVEGISKALAETIYNHLH.

Positions 22 to 100 (NLPGVYRFFN…IKALSPKYNI (79 aa)) constitute a GIY-YIG domain. One can recognise a UVR domain in the interval 209-244 (DELTRTLQHKMQTAAANLQFEEAARYRDQIQALGIM).

This sequence belongs to the UvrC family. Interacts with UvrB in an incision complex.

It is found in the cytoplasm. The UvrABC repair system catalyzes the recognition and processing of DNA lesions. UvrC both incises the 5' and 3' sides of the lesion. The N-terminal half is responsible for the 3' incision and the C-terminal half is responsible for the 5' incision. This is UvrABC system protein C from Neisseria meningitidis serogroup B (strain ATCC BAA-335 / MC58).